The sequence spans 430 residues: MLDPNLLRNEPDAVAEKLARRGFKLDVDKLGALEERRKVLQVKTENLQAERNSRSKSIGQAKARGEDIEPLRLEVNKLGEELDAAKAELDALQAEIRDIALTIPNLPADEVPVGKDENDNVEVSCWGTPREFDFEVRDHVTLGEMHSGLDFAAAVKLTGSRFVVMKGQIARMHRALSQFMLDLHTEQHGYSENYVPYLVNQDTLYGTGQLPKFAGDLFHTRPLEEEADTSNYALIPTAEVPLTNLVRGEIIDEDDLPIKMTAHTPCFRSEAGSYGRDTRGLIRMHQFDKVEMVQIVRPEDSMAALEEMTGHAEKVLQLLGLPYRKIILCTGDMGFGACKTYDLEVWIPAQNTYREISSCSNVWDFQARRMQARCRSKSDKKTRLVHTLNGSGLAVGRTLVAVMENYQQADGRIEVPEVLRPYMNGLEYIG.

237–239 (TAE) contacts L-serine. 268 to 270 (RSE) is an ATP binding site. Glutamate 291 is an L-serine binding site. 355-358 (EISS) provides a ligand contact to ATP. Serine 391 provides a ligand contact to L-serine.

It belongs to the class-II aminoacyl-tRNA synthetase family. Type-1 seryl-tRNA synthetase subfamily. In terms of assembly, homodimer. The tRNA molecule binds across the dimer.

Its subcellular location is the cytoplasm. The enzyme catalyses tRNA(Ser) + L-serine + ATP = L-seryl-tRNA(Ser) + AMP + diphosphate + H(+). The catalysed reaction is tRNA(Sec) + L-serine + ATP = L-seryl-tRNA(Sec) + AMP + diphosphate + H(+). The protein operates within aminoacyl-tRNA biosynthesis; selenocysteinyl-tRNA(Sec) biosynthesis; L-seryl-tRNA(Sec) from L-serine and tRNA(Sec): step 1/1. Catalyzes the attachment of serine to tRNA(Ser). Is also able to aminoacylate tRNA(Sec) with serine, to form the misacylated tRNA L-seryl-tRNA(Sec), which will be further converted into selenocysteinyl-tRNA(Sec). In Shigella dysenteriae serotype 1 (strain Sd197), this protein is Serine--tRNA ligase.